The sequence spans 156 residues: Small ribosomal subunit protein uS7 (156 aa).

The protein belongs to the universal ribosomal protein uS7 family. In terms of assembly, part of the 30S ribosomal subunit. Contacts proteins S9 and S11.

Functionally, one of the primary rRNA binding proteins, it binds directly to 16S rRNA where it nucleates assembly of the head domain of the 30S subunit. Is located at the subunit interface close to the decoding center, probably blocks exit of the E-site tRNA. This chain is Small ribosomal subunit protein uS7, found in Rhodopseudomonas palustris (strain BisB18).